Here is a 510-residue protein sequence, read N- to C-terminus: NAD(P)H-quinone oxidoreductase subunit 2 B, chloroplastic (510 aa).

The next 13 membrane-spanning stretches (helical) occupy residues 24 to 44 (LLLFDGSFIFPECILIFGLIL), 57 to 77 (IPWLYFISSTSLVMSITALLF), 99 to 119 (IFQFLILLCSTLCIPLSVEYI), 124 to 144 (MAITEFLLFVLTATLGGMFLC), 149 to 169 (LITIFVAPECFSLCSYLLSGY), 183 to 203 (YLLMGGASSSILVHGFSWLYG), 227 to 247 (PGISIALIFITVGIGFKLSLA), 295 to 315 (WHLLLEILAILSMILGNLIAI), 323 to 343 (MLAYSSIGQIGYVIIGIIVGD), 354 to 374 (YMLFYISMNLGTFACIVLFGL), 395 to 415 (ALSLALCLLSLGGLPPLAGFF), 418 to 438 (LHLFWCGWQAGLYFLVSIGLL), and 484 to 504 (MIVCVIASTILGISMNPIIAI).

This sequence belongs to the complex I subunit 2 family. NDH is composed of at least 16 different subunits, 5 of which are encoded in the nucleus.

It localises to the plastid. The protein localises to the chloroplast thylakoid membrane. It catalyses the reaction a plastoquinone + NADH + (n+1) H(+)(in) = a plastoquinol + NAD(+) + n H(+)(out). The enzyme catalyses a plastoquinone + NADPH + (n+1) H(+)(in) = a plastoquinol + NADP(+) + n H(+)(out). In terms of biological role, NDH shuttles electrons from NAD(P)H:plastoquinone, via FMN and iron-sulfur (Fe-S) centers, to quinones in the photosynthetic chain and possibly in a chloroplast respiratory chain. The immediate electron acceptor for the enzyme in this species is believed to be plastoquinone. Couples the redox reaction to proton translocation, and thus conserves the redox energy in a proton gradient. This Citrus sinensis (Sweet orange) protein is NAD(P)H-quinone oxidoreductase subunit 2 B, chloroplastic.